The following is a 298-amino-acid chain: Protoheme IX farnesyltransferase (298 aa).

The next 9 membrane-spanning stretches (helical) occupy residues 26 to 46 (VVSL…PGVV), 52 to 72 (IFAT…NCLV), 99 to 119 (FVFL…LVNP), 120 to 140 (LTMW…TVIL), 148 to 168 (IVIG…AVTG), 174 to 194 (ALLL…ALAL), 219 to 239 (LHVL…YATQ), 241 to 261 (SGLI…YYAV), and 276 to 296 (FRYS…DHYI).

Belongs to the UbiA prenyltransferase family. Protoheme IX farnesyltransferase subfamily.

The protein localises to the cell inner membrane. It catalyses the reaction heme b + (2E,6E)-farnesyl diphosphate + H2O = Fe(II)-heme o + diphosphate. Its pathway is porphyrin-containing compound metabolism; heme O biosynthesis; heme O from protoheme: step 1/1. Converts heme B (protoheme IX) to heme O by substitution of the vinyl group on carbon 2 of heme B porphyrin ring with a hydroxyethyl farnesyl side group. The protein is Protoheme IX farnesyltransferase of Nitrosospira multiformis (strain ATCC 25196 / NCIMB 11849 / C 71).